The chain runs to 251 residues: tRNA (guanine-N(1)-)-methyltransferase (251 aa).

S-adenosyl-L-methionine is bound by residues Gly-117 and 137–142; that span reads IGDYVL.

The protein belongs to the RNA methyltransferase TrmD family. As to quaternary structure, homodimer.

Its subcellular location is the cytoplasm. It carries out the reaction guanosine(37) in tRNA + S-adenosyl-L-methionine = N(1)-methylguanosine(37) in tRNA + S-adenosyl-L-homocysteine + H(+). In terms of biological role, specifically methylates guanosine-37 in various tRNAs. The polypeptide is tRNA (guanine-N(1)-)-methyltransferase (Actinobacillus pleuropneumoniae serotype 5b (strain L20)).